A 362-amino-acid polypeptide reads, in one-letter code: Phosphoserine aminotransferase (362 aa).

2 residues coordinate L-glutamate: Ser-9 and Arg-42. Pyridoxal 5'-phosphate contacts are provided by residues 76 to 77, Trp-102, Thr-153, Asp-174, and Gln-197; that span reads AR. Lys-198 is subject to N6-(pyridoxal phosphate)lysine. 239–240 is a pyridoxal 5'-phosphate binding site; it reads NT.

This sequence belongs to the class-V pyridoxal-phosphate-dependent aminotransferase family. SerC subfamily. Homodimer. The cofactor is pyridoxal 5'-phosphate.

The protein resides in the cytoplasm. The enzyme catalyses O-phospho-L-serine + 2-oxoglutarate = 3-phosphooxypyruvate + L-glutamate. The catalysed reaction is 4-(phosphooxy)-L-threonine + 2-oxoglutarate = (R)-3-hydroxy-2-oxo-4-phosphooxybutanoate + L-glutamate. It functions in the pathway amino-acid biosynthesis; L-serine biosynthesis; L-serine from 3-phospho-D-glycerate: step 2/3. The protein operates within cofactor biosynthesis; pyridoxine 5'-phosphate biosynthesis; pyridoxine 5'-phosphate from D-erythrose 4-phosphate: step 3/5. Its function is as follows. Catalyzes the reversible conversion of 3-phosphohydroxypyruvate to phosphoserine and of 3-hydroxy-2-oxo-4-phosphonooxybutanoate to phosphohydroxythreonine. The sequence is that of Phosphoserine aminotransferase from Photorhabdus laumondii subsp. laumondii (strain DSM 15139 / CIP 105565 / TT01) (Photorhabdus luminescens subsp. laumondii).